Here is a 398-residue protein sequence, read N- to C-terminus: Alpha-ketoglutarate-dependent dioxygenase bsc9 (398 aa).

Residues His167 and Asp169 each contribute to the Fe cation site. Position 212 (Thr212) interacts with 2-oxoglutarate. His365 contacts Fe cation. Residue Arg377 coordinates 2-oxoglutarate.

It belongs to the TfdA dioxygenase family. Fe(2+) serves as cofactor.

It functions in the pathway mycotoxin biosynthesis. Its function is as follows. Alpha-ketoglutarate dependent dioxygenase; part of the gene cluster that mediates the biosynthesis of the diterpene glucoside brassicicene C. In the first step of the brassicicene C biosynthesis, the bifunctional diterpene synthase bsc8 that possesses both prenyl transferase and terpene cyclase activity, converts isopentenyl diphosphate and dimethylallyl diphosphate into geranylgeranyl diphosphate (GGDP) that is further converted into fusicocca-2,10(14)-diene, the first precursor for brassicicene C. Fusicocca-2,10(14)-diene is then substrate of cytochrome P450 monooxygenase bsc1 for hydroxylation at the C-8 position. Oxidation at C-16 position to aldehyde is then catalyzed by the cytochrome P450 monooyxygenase bsc7, yielding fusicocca-2,10(14)-diene-8-beta,16-diol. Follows the isomerization of the double bond and reduction of aldehyde to alcohol catalyzed by the short-chain dehydrogenase/reductase bsc3 to yield the diol compound fusicocca-1,10(14)-diene-8 beta,16-diol. The next step is the oxidation at the C-3 position of fusicocca-2,10(14)-diene-8-beta,16-diol catalyzed by the alpha-ketoglutarate dependent dioxygenase bsc9, to produce a triol compound. Methylation of the hydroxy group at position 16 is performed by the methyltransferase bsc6. 16-O-methylation is followed by oxidation at the C-13 position to ketone and an alkyl shift of the methyl group leads to brassicicene C. Although the probable acetyltransferase bsc4 is included in the gene cluster, no acetylation reactions are necessary for brassicicene C biosynthesis. However, the fact that brassicicene E, which is a structurally related compound having an acetoxy group at position 12, was previously isolated from another strain of A.brassicicola suggests that the ATCC 96836 strain might also produce a small amount of brassicicene E. This is Alpha-ketoglutarate-dependent dioxygenase bsc9 from Alternaria brassicicola (Dark leaf spot agent).